Consider the following 369-residue polypeptide: Alanine racemase (369 aa).

Residue lysine 35 is the Proton acceptor; specific for D-alanine of the active site. Position 35 is an N6-(pyridoxal phosphate)lysine (lysine 35). A substrate-binding site is contributed by arginine 130. Tyrosine 257 serves as the catalytic Proton acceptor; specific for L-alanine. Position 305 (methionine 305) interacts with substrate.

The protein belongs to the alanine racemase family. Pyridoxal 5'-phosphate serves as cofactor.

The catalysed reaction is L-alanine = D-alanine. Its pathway is amino-acid biosynthesis; D-alanine biosynthesis; D-alanine from L-alanine: step 1/1. In terms of biological role, catalyzes the interconversion of L-alanine and D-alanine. May also act on other amino acids. The polypeptide is Alanine racemase (alr) (Paracidovorax citrulli (strain AAC00-1) (Acidovorax citrulli)).